A 566-amino-acid chain; its full sequence is Proline--tRNA ligase 1 (566 aa).

The protein belongs to the class-II aminoacyl-tRNA synthetase family. ProS type 1 subfamily. As to quaternary structure, homodimer.

It is found in the cytoplasm. It catalyses the reaction tRNA(Pro) + L-proline + ATP = L-prolyl-tRNA(Pro) + AMP + diphosphate. Functionally, catalyzes the attachment of proline to tRNA(Pro) in a two-step reaction: proline is first activated by ATP to form Pro-AMP and then transferred to the acceptor end of tRNA(Pro). As ProRS can inadvertently accommodate and process non-cognate amino acids such as alanine and cysteine, to avoid such errors it has two additional distinct editing activities against alanine. One activity is designated as 'pretransfer' editing and involves the tRNA(Pro)-independent hydrolysis of activated Ala-AMP. The other activity is designated 'posttransfer' editing and involves deacylation of mischarged Ala-tRNA(Pro). The misacylated Cys-tRNA(Pro) is not edited by ProRS. The sequence is that of Proline--tRNA ligase 1 from Bacillus thuringiensis subsp. konkukian (strain 97-27).